Here is a 358-residue protein sequence, read N- to C-terminus: Peptide chain release factor 1 (358 aa).

Residue Gln-234 is modified to N5-methylglutamine.

It belongs to the prokaryotic/mitochondrial release factor family. Methylated by PrmC. Methylation increases the termination efficiency of RF1.

The protein resides in the cytoplasm. Peptide chain release factor 1 directs the termination of translation in response to the peptide chain termination codons UAG and UAA. This chain is Peptide chain release factor 1, found in Akkermansia muciniphila (strain ATCC BAA-835 / DSM 22959 / JCM 33894 / BCRC 81048 / CCUG 64013 / CIP 107961 / Muc).